The sequence spans 447 residues: Phosphoglucosamine mutase (447 aa).

Serine 104 acts as the Phosphoserine intermediate in catalysis. Residues serine 104, aspartate 243, aspartate 245, and aspartate 247 each contribute to the Mg(2+) site. Serine 104 carries the post-translational modification Phosphoserine.

The protein belongs to the phosphohexose mutase family. Mg(2+) is required as a cofactor. In terms of processing, activated by phosphorylation.

It carries out the reaction alpha-D-glucosamine 1-phosphate = D-glucosamine 6-phosphate. Catalyzes the conversion of glucosamine-6-phosphate to glucosamine-1-phosphate. This is Phosphoglucosamine mutase from Corynebacterium glutamicum (strain ATCC 13032 / DSM 20300 / JCM 1318 / BCRC 11384 / CCUG 27702 / LMG 3730 / NBRC 12168 / NCIMB 10025 / NRRL B-2784 / 534).